The chain runs to 144 residues: Large ribosomal subunit protein uL15 (144 aa).

The tract at residues 1–57 is disordered; the sequence is MQLNDLRSAPGARREKHRPGRGIGSGLGKTGGRGHKGLTSRSGGKVAPGFEGGQQPL. A compositionally biased stretch (gly residues) spans 21–31; the sequence is RGIGSGLGKTG.

This sequence belongs to the universal ribosomal protein uL15 family. As to quaternary structure, part of the 50S ribosomal subunit.

Binds to the 23S rRNA. The protein is Large ribosomal subunit protein uL15 of Pseudomonas aeruginosa (strain LESB58).